We begin with the raw amino-acid sequence, 724 residues long: uncharacterized protein (724 aa).

4 disordered regions span residues 97-131 (RKSFTTPKGVSSEARRSFTRSASYSESNNSFYPSP), 187-252 (ETKI…FETE), 309-434 (FETE…TSKL), and 454-473 (RGVEGKTKKASKGQNSVAEK). Polar residues predominate over residues 115 to 128 (TRSASYSESNNSFY). A coiled-coil region spans residues 187 to 217 (ETKIGIEEENEESEILAEEKEEEDNDFSVLE). Residues 193-212 (EEENEESEILAEEKEEEDND) are compositionally biased toward acidic residues. 2 stretches are compositionally biased toward basic and acidic residues: residues 223 to 252 (QEIKTEHHRESSGTEHETEAKDHSEGFETE) and 309 to 322 (FETEHENETEDHSE). Low complexity-rich tracts occupy residues 323 to 333 (TTTSETDSTES) and 347 to 366 (SPQTPSPTVSTFNTKSSLRS). A compositionally biased stretch (pro residues) spans 367–388 (QPPPPPPSPEHKAPAPPPPPPM). The segment covering 400 to 410 (FSKTHSTNGDN) has biased composition (polar residues). Coiled coils occupy residues 495–522 (SYFQQIEEDVQKYAKSIEELKSSIHSFQ) and 649–678 (MELALKERREANEEAKNGEESKMKEERAKR).

This is an uncharacterized protein from Arabidopsis thaliana (Mouse-ear cress).